A 347-amino-acid chain; its full sequence is CRISPR-associated endonuclease Cas1 4 (347 aa).

Residues 1–21 (MNIENEVHIENASESKREPKP) are compositionally biased toward basic and acidic residues. Residues 1 to 25 (MNIENEVHIENASESKREPKPPEGL) are disordered. Mn(2+) contacts are provided by Glu176, His241, and Glu256.

The protein belongs to the CRISPR-associated endonuclease Cas1 family. In terms of assembly, homodimer, forms a heterotetramer with a Cas2 homodimer. The cofactor is Mg(2+). Requires Mn(2+) as cofactor.

CRISPR (clustered regularly interspaced short palindromic repeat), is an adaptive immune system that provides protection against mobile genetic elements (viruses, transposable elements and conjugative plasmids). CRISPR clusters contain spacers, sequences complementary to antecedent mobile elements, and target invading nucleic acids. CRISPR clusters are transcribed and processed into CRISPR RNA (crRNA). Acts as a dsDNA endonuclease. Involved in the integration of spacer DNA into the CRISPR cassette. This is CRISPR-associated endonuclease Cas1 4 from Methanospirillum hungatei JF-1 (strain ATCC 27890 / DSM 864 / NBRC 100397 / JF-1).